Consider the following 139-residue polypeptide: Serpin-like protein HMSD (139 aa).

Residues 1–20 (MSISSALAMVFMGAKGNTAA) form the signal peptide. N-linked (GlcNAc...) asparagine glycosylation occurs at N50.

It belongs to the serpin family. In terms of tissue distribution, highly expressed in dendritic cells and primary leukemia cells, especially those of myeloid lineage.

The protein localises to the secreted. Its function is as follows. Putative serine protease inhibitor. The protein is Serpin-like protein HMSD (HMSD) of Homo sapiens (Human).